The following is a 395-amino-acid chain: RNA pseudouridine synthase 7 (395 aa).

The disordered stretch occupies residues 1–21 (MKRKQQEDDNDDGVEKAVSPV). The 63-residue stretch at 74–136 (KTIVDLFADE…HEPPVMIDDV (63 aa)) folds into the S4 RNA-binding domain. Asp-187 is a catalytic residue. Over residues 244–255 (EGRSTAEDANSS) the composition is skewed to polar residues. The segment at 244–263 (EGRSTAEDANSSGDDKKVKG) is disordered.

The protein belongs to the pseudouridine synthase RluA family.

The enzyme catalyses a uridine in RNA = a pseudouridine in RNA. This Arabidopsis thaliana (Mouse-ear cress) protein is RNA pseudouridine synthase 7.